The primary structure comprises 967 residues: Probable serine/threonine-protein kinase DDB_G0290621 (967 aa).

Disordered regions lie at residues 65–122, 215–251, and 287–326; these read EDSD…KEKE, SSLS…SSSS, and QQQL…SPRT. Residues 66 to 94 show a composition bias toward acidic residues; it reads DSDEDDDDEEDEEDEEDSDEEEDDDVVED. Positions 95–122 are enriched in basic and acidic residues; that stretch reads DNTKDIGKSRDSDKSIKGKEKGKEKEKE. Over residues 297–326 the composition is skewed to low complexity; that stretch reads QQQQQQQQQQQQQNNSMLQQSNNNNISPRT. A Protein kinase domain is found at 345–610; that stretch reads FNDSNKIGEG…EIRSRLSEII (266 aa). ATP is bound by residues 351-359 and Lys-368; that span reads IGEGGQCSI. Residue Asp-467 is the Proton acceptor of the active site. Disordered regions lie at residues 634–667, 700–752, and 862–882; these read DDSL…NNNN, STSN…NNNI, and TSSS…NPSN. Residues 639 to 666 show a composition bias toward low complexity; that stretch reads NNNNNNNQNNNNQNNNNNNNNNNNNNNN. A compositionally biased stretch (low complexity) spans 863 to 882; it reads SSSSNKNNNNNNNDNNNPSN.

Belongs to the protein kinase superfamily. TKL Ser/Thr protein kinase family.

It carries out the reaction L-seryl-[protein] + ATP = O-phospho-L-seryl-[protein] + ADP + H(+). The enzyme catalyses L-threonyl-[protein] + ATP = O-phospho-L-threonyl-[protein] + ADP + H(+). The sequence is that of Probable serine/threonine-protein kinase DDB_G0290621 from Dictyostelium discoideum (Social amoeba).